The chain runs to 649 residues: Nitrosuccinic acid synthase npaA (649 aa).

It belongs to the nitrosuccinic acid synthase family. FAD serves as cofactor.

The catalysed reaction is L-aspartate + 3 NADPH + 3 O2 + 2 H(+) = 2-nitrobutanedioate + 3 NADP(+) + 4 H2O. Its pathway is mycotoxin biosynthesis. Its function is as follows. Nitrosuccinic acid synthase; part of the gene cluster that mediates the biosynthesis of the deadly neurotoxic nitroalkane 3-nitropropanoic acid (3-NPA) that acts as an antimetabolite of succinate and irreversibly inhibits succinate dehydrogenase and disrupts mitochondrial oxidative phosphorylation. NpaA catalyzes the iterative oxidation of L-aspartic acid to nitrosuccinic acid (2-nitrobutanedioate). Alternative amino acid substrates such as L-glutamate and D-aspartate are not accepted by npaA as a substrate, showing the strict substrate specificity toward L-aspartate. The nitrosuccinic acid decarboxylase npaB then facilitates decarboxylation of Nitrosuccinic acid to produce 3-NPA. This chain is Nitrosuccinic acid synthase npaA, found in Aspergillus oryzae (strain ATCC 42149 / RIB 40) (Yellow koji mold).